Here is a 292-residue protein sequence, read N- to C-terminus: 4-hydroxy-tetrahydrodipicolinate synthase (292 aa).

Position 45 (threonine 45) interacts with pyruvate. Tyrosine 133 (proton donor/acceptor) is an active-site residue. The active-site Schiff-base intermediate with substrate is lysine 161. A pyruvate-binding site is contributed by isoleucine 203.

This sequence belongs to the DapA family. In terms of assembly, homotetramer; dimer of dimers.

It localises to the cytoplasm. It catalyses the reaction L-aspartate 4-semialdehyde + pyruvate = (2S,4S)-4-hydroxy-2,3,4,5-tetrahydrodipicolinate + H2O + H(+). It functions in the pathway amino-acid biosynthesis; L-lysine biosynthesis via DAP pathway; (S)-tetrahydrodipicolinate from L-aspartate: step 3/4. Functionally, catalyzes the condensation of (S)-aspartate-beta-semialdehyde [(S)-ASA] and pyruvate to 4-hydroxy-tetrahydrodipicolinate (HTPA). In Shigella dysenteriae serotype 1 (strain Sd197), this protein is 4-hydroxy-tetrahydrodipicolinate synthase.